A 333-amino-acid chain; its full sequence is Biotin synthase (333 aa).

Positions 47–276 constitute a Radical SAM core domain; that stretch reads YYGKKVKLNM…TKEIRISGGR (230 aa). [4Fe-4S] cluster-binding residues include cysteine 65, cysteine 69, and cysteine 72. 4 residues coordinate [2Fe-2S] cluster: cysteine 109, cysteine 141, cysteine 201, and arginine 271.

It belongs to the radical SAM superfamily. Biotin synthase family. As to quaternary structure, homodimer. Requires [4Fe-4S] cluster as cofactor. [2Fe-2S] cluster serves as cofactor.

It catalyses the reaction (4R,5S)-dethiobiotin + (sulfur carrier)-SH + 2 reduced [2Fe-2S]-[ferredoxin] + 2 S-adenosyl-L-methionine = (sulfur carrier)-H + biotin + 2 5'-deoxyadenosine + 2 L-methionine + 2 oxidized [2Fe-2S]-[ferredoxin]. Its pathway is cofactor biosynthesis; biotin biosynthesis; biotin from 7,8-diaminononanoate: step 2/2. Functionally, catalyzes the conversion of dethiobiotin (DTB) to biotin by the insertion of a sulfur atom into dethiobiotin via a radical-based mechanism. This chain is Biotin synthase, found in Bacillus licheniformis (strain ATCC 14580 / DSM 13 / JCM 2505 / CCUG 7422 / NBRC 12200 / NCIMB 9375 / NCTC 10341 / NRRL NRS-1264 / Gibson 46).